The sequence spans 277 residues: Inner kinetochore subunit sim4 (277 aa).

Residues 96 to 138 (NNISDLKKNLHSNKKLEAVLKEELHQIKKFSSDLQSLKSSMGE) are a coiled coil.

It belongs to the CENP-K/MCM22 family. In terms of assembly, component of the inner kinetochore constitutive centromere-associated network (CCAN) (also known as central kinetochore Sim4 complex in fission yeast), which is composed of at least cnl2, cnp3, cnp20, fta1, fta2, fta3, fta4, fta6, fta7, mal2, mhf1, mhf2, mis6, mis15, mis17, sim4 and wip1. Interacts with mis6 and dad1.

The protein resides in the nucleus. The protein localises to the chromosome. It localises to the centromere. In terms of biological role, component of the kinetochore, a multiprotein complex that assembles on centromeric DNA and attaches chromosomes to spindle microtubules, mediating chromosome segregation and sister chromatid segregation during meiosis and mitosis. Component of the inner kinetochore constitutive centromere-associated network (CCAN), which serves as a structural platform for outer kinetochore assembly. This Schizosaccharomyces pombe (strain 972 / ATCC 24843) (Fission yeast) protein is Inner kinetochore subunit sim4 (sim4).